The sequence spans 362 residues: Large ribosomal subunit protein uL3 (362 aa).

The interval 340–362 (RPPKKKPPVQRPQITYVSVESKQ) is disordered. Residues 351–362 (PQITYVSVESKQ) are compositionally biased toward polar residues.

The protein belongs to the universal ribosomal protein uL3 family. In terms of assembly, part of the 50S ribosomal subunit. Forms a cluster with proteins L14 and L24e.

One of the primary rRNA binding proteins, it binds directly near the 3'-end of the 23S rRNA, where it nucleates assembly of the 50S subunit. In Pyrococcus horikoshii (strain ATCC 700860 / DSM 12428 / JCM 9974 / NBRC 100139 / OT-3), this protein is Large ribosomal subunit protein uL3.